The following is a 574-amino-acid chain: R-linalool synthase, chloroplastic (574 aa).

The N-terminal 40 residues, 1–40 (MSCARITVTLPYRSAKTSIQRGITHCPALLRPRFSACTPL), are a transit peptide targeting the chloroplast. The span at 52-61 (INGDNSPLKN) shows a compositional bias: polar residues. Residues 52 to 71 (INGDNSPLKNTHQHVEERSS) are disordered. The (2E)-geranyl diphosphate site is built by R287, D324, D328, R467, and D470. Residues D324 and D328 each contribute to the Mg(2+) site. The DDXXD motif motif lies at 324–328 (DDIFD). Mg(2+)-binding residues include D470, T474, and E478.

It belongs to the terpene synthase family. Tpsb subfamily. Mg(2+) is required as a cofactor. The cofactor is Mn(2+).

The protein localises to the plastid. Its subcellular location is the chloroplast. It carries out the reaction (2E)-geranyl diphosphate + H2O = (R)-linalool + diphosphate. The protein operates within secondary metabolite biosynthesis; terpenoid biosynthesis. Its function is as follows. Monoterpene synthase that catalyzes the formation of (3R)-linalool from geranyl diphosphate. The protein is R-linalool synthase, chloroplastic (LIS) of Ocimum basilicum (Sweet basil).